We begin with the raw amino-acid sequence, 244 residues long: Adenosylcobinamide-GDP ribazoletransferase (244 aa).

Helical transmembrane passes span 33 to 53 (WFAVVGLLVGALVAALGWLGA), 57 to 77 (PWLAALLMLVTWVWVTGGLHL), 109 to 129 (FAVITLALQLLAKLVLLMLAV), 132 to 152 (GVGWSALVLLPAWARLGAVWW), and 176 to 196 (FWLSWLLLAALSAWLAPVLLL).

This sequence belongs to the CobS family. Mg(2+) is required as a cofactor.

It is found in the cell inner membrane. It carries out the reaction alpha-ribazole + adenosylcob(III)inamide-GDP = adenosylcob(III)alamin + GMP + H(+). The catalysed reaction is alpha-ribazole 5'-phosphate + adenosylcob(III)inamide-GDP = adenosylcob(III)alamin 5'-phosphate + GMP + H(+). Its pathway is cofactor biosynthesis; adenosylcobalamin biosynthesis; adenosylcobalamin from cob(II)yrinate a,c-diamide: step 7/7. Joins adenosylcobinamide-GDP and alpha-ribazole to generate adenosylcobalamin (Ado-cobalamin). Also synthesizes adenosylcobalamin 5'-phosphate from adenosylcobinamide-GDP and alpha-ribazole 5'-phosphate. The polypeptide is Adenosylcobinamide-GDP ribazoletransferase (Laribacter hongkongensis (strain HLHK9)).